A 413-amino-acid chain; its full sequence is ATP phosphoribosyltransferase 2, chloroplastic (413 aa).

The transit peptide at 1–57 (MPISIPLNATLQYSSPSSSSSSSSLVPSSPLFSPIPSTTVSLTGIRQRCLRMVTSCV) directs the protein to the chloroplast.

Belongs to the ATP phosphoribosyltransferase family. Long subfamily. Mg(2+) is required as a cofactor.

Its subcellular location is the plastid. The protein resides in the chloroplast. It carries out the reaction 1-(5-phospho-beta-D-ribosyl)-ATP + diphosphate = 5-phospho-alpha-D-ribose 1-diphosphate + ATP. Its pathway is amino-acid biosynthesis; L-histidine biosynthesis; L-histidine from 5-phospho-alpha-D-ribose 1-diphosphate: step 1/9. Feedback inhibited by L-histidine. In terms of biological role, catalyzes the condensation of ATP and 5-phosphoribose 1-diphosphate to form N'-(5'-phosphoribosyl)-ATP (PR-ATP). This Arabidopsis thaliana (Mouse-ear cress) protein is ATP phosphoribosyltransferase 2, chloroplastic (HISN1B).